A 338-amino-acid chain; its full sequence is Bifunctional methylenetetrahydrofolate dehydrogenase/cyclohydrolase 2, mitochondrial (338 aa).

Substrate-binding positions include 89 to 93 and 136 to 138; these read YVRNK and VQL. Residues 205 to 207 and Arg-238 each bind NAD(+); that span reads GRS. Residue 314–318 participates in substrate binding; it reads PGGVG.

This sequence belongs to the tetrahydrofolate dehydrogenase/cyclohydrolase family. Mg(2+) is required as a cofactor. In terms of tissue distribution, widely expressed.

The protein resides in the mitochondrion inner membrane. It carries out the reaction (6R)-5,10-methylene-5,6,7,8-tetrahydrofolate + NAD(+) = (6R)-5,10-methenyltetrahydrofolate + NADH. The catalysed reaction is (6R)-5,10-methenyltetrahydrofolate + H2O = (6R)-10-formyltetrahydrofolate + H(+). It catalyses the reaction (6R)-5,10-methylene-5,6,7,8-tetrahydrofolate + NADP(+) = (6R)-5,10-methenyltetrahydrofolate + NADPH. It participates in one-carbon metabolism; tetrahydrofolate interconversion. Its function is as follows. Bifunctional mitochondrial folate-interconverting enzyme that has both NAD/NADP-dependent methylenetetrahydrofolate dehydrogenase and methenyltetrahydrofolate cyclohydrolase activities. The polypeptide is Bifunctional methylenetetrahydrofolate dehydrogenase/cyclohydrolase 2, mitochondrial (Mus musculus (Mouse)).